The following is a 1837-amino-acid chain: Zinc finger SWIM domain-containing protein 8 (1837 aa).

Phosphoserine is present on residues serine 36, serine 48, and serine 53. The interval 45–65 (RKQSAGPNSPTGGGGGGGSGG) is disordered. Residues 55–65 (TGGGGGGGSGG) show a composition bias toward gly residues. The SWIM-type zinc finger occupies 172–208 (YNVAVMFDRCRVTSCSCTCGAGAKWCTHVVALCLFRI). Residue serine 437 is modified to Phosphoserine. Disordered stretches follow at residues 514 to 727 (SRPG…EEDD), 803 to 823 (NPPD…KVST), and 1016 to 1232 (SQTH…VPNQ). Composition is skewed to basic and acidic residues over residues 523–532 (GLEESRDRPR) and 566–575 (LSAEGGDKAL). The residue at position 567 (serine 567) is a Phosphoserine. The span at 579–602 (GPGGGKAKALGGAGSGSKGSAGGG) shows a compositional bias: gly residues. Residues 1019 to 1040 (HKPQTLSSFYSSSRPTTASQRS) are compositionally biased toward polar residues. Residues 1119–1130 (SRGGYNGRGWGS) show a composition bias toward gly residues. Threonine 1139 bears the Phosphothreonine mark. Over residues 1144–1159 (IDSSAPETTSDSSPTL) the composition is skewed to polar residues. Residues serine 1153, serine 1156, and serine 1160 each carry the phosphoserine modification. Residues 1174 to 1209 (GRGQDSDSISSSSSDSLGSSSSSGSRRASASGGARA) show a composition bias toward low complexity. Positions 1210–1226 (KTVEVGRYKGRRPESHA) are enriched in basic and acidic residues. Position 1267 is a phosphoserine (serine 1267). Disordered stretches follow at residues 1442 to 1464 (SASG…GGPG) and 1635 to 1656 (QPSP…SQPV). Residues 1447 to 1464 (RAGGEAGRGMPEGRGGPG) show a composition bias toward gly residues. Serine 1836 carries the post-translational modification Phosphoserine.

The protein belongs to the ZSWIM8 family. In terms of assembly, component of the SCF-like E3 ubiquitin-protein ligase complex which contains CUL3, RBX1, ELOB, ELOC and ZSWIM8. (Microbial infection) Interacts with Zika virus protein NS5; this interaction allows STAT2 binding and subsequent proteasomal degradation.

The protein resides in the cytoplasm. Its subcellular location is the cytosol. The protein operates within protein modification; protein ubiquitination. In terms of biological role, substrate recognition component of a SCF-like E3 ubiquitin-protein ligase complex that promotes target-directed microRNA degradation (TDMD), a process that mediates degradation of microRNAs (miRNAs). The SCF-like E3 ubiquitin-protein ligase complex acts by catalyzing ubiquitination and subsequent degradation of AGO proteins (AGO1, AGO2, AGO3 and/or AGO4), thereby exposing miRNAs for degradation. Specifically recognizes and binds AGO proteins when they are engaged with a TDMD target. May also act as a regulator of axon guidance: specifically recognizes misfolded ROBO3 and promotes its ubiquitination and subsequent degradation. Plays an essential role for proper embryonic development of heart and lung. Controls protein quality of DAB1, a key signal molecule for brain development, thus protecting its signaling strength. Mechanistically, recognizes intrinsically disordered regions of DAB1 and eliminates misfolded DAB1 that cannot be properly phosphorylated. Functionally, (Microbial infection) Participates in Zika virus inhibition of IFN signaling by acting as a scaffold protein to connect ZSWIM8/CUL3 ligase complex and STAT2, leading to STAT2 degradation. This is Zinc finger SWIM domain-containing protein 8 from Homo sapiens (Human).